A 1606-amino-acid polypeptide reads, in one-letter code: Fatty acid synthase apf5 (1606 aa).

A Carrier domain is found at 142-218 (VPVSAILISL…ETLSTSHDGQ (77 aa)). At serine 177 the chain carries O-(pantetheine 4'-phosphoryl)serine. The Ketosynthase family 3 (KS3) domain occupies 996–1539 (KESLIEVALQ…QKGGQALLVH (544 aa)). Catalysis depends on for beta-ketoacyl synthase activity residues cysteine 1182, histidine 1424, and histidine 1465.

Belongs to the thiolase-like superfamily. Fungal fatty acid synthetase subunit alpha family.

It carries out the reaction a fatty acyl-[ACP] + malonyl-[ACP] + H(+) = a 3-oxoacyl-[ACP] + holo-[ACP] + CO2. It functions in the pathway secondary metabolite biosynthesis. Functionally, fatty acid synthase; part of the gene cluster that mediates the biosynthesis of the cyclic tetrapeptide apicidin F (APF). The non-ribosomal peptide synthetase apf1 incorporates four different amino acids to produce apicidin F: L-phenylalanine, D-pipecolic acid (D-pip), N-methoxy-L-tryptophan and L-2-aminooctanedioic acid. L-Phenylalanine is the only proteinogenic amino acid directly used by apf1. The 3 other apf1 substrates are non-proteinogenic and have to be modified by other enzymes of the cluster. Lysine is converted to delta-1-pyrroline-5-carboxylate (P5C) which is reduced to L-pipecolic acid (L-pip) by apf3. L-pip is epimerized to D-pip, probably by apf1 activity, prior to incorporation. L-Tryptophan is N-oxidyzed by one of the cytochrome P450 monooxygenases (apf7 or apf8), and further methylated at the hydroxy group by the O-methyltransferase apf6 to yield N-methoxy-L-tryptophan. The synthesis of the fourth apf1 substrate is more complex. The fatty acid synthase apf5 is involved in the synthesis of the octanoic acid backbone of L-2-aminooctanedioic acid by fixing one acetyl-CoA unit and three malonyl-CoA units. Then one of the cytochrome P450 monooxygenases (apf7 or apf8) may oxidize this backbone to 2-oxooctanoic acid. The aminotransferase apf4 is predicted to catalyze the exchange of the keto group with an amino group. The next step would be the oxidation of 2-aminooctanoic acid by one of the cytochrome P450 monooxygenases (apf7 or apf8). The last step is the oxidation of 2-amino-8-hydroxyoctanoic acid to 2-aminooctanedioic acid is catalyzed by the FAD-dependent monooxygenase apf9. This chain is Fatty acid synthase apf5, found in Gibberella fujikuroi (strain CBS 195.34 / IMI 58289 / NRRL A-6831) (Bakanae and foot rot disease fungus).